Here is a 29-residue protein sequence, read N- to C-terminus: Brevinin-2Rc (29 aa).

Cys23 and Cys29 are disulfide-bonded.

Expressed by the skin glands.

Its subcellular location is the secreted. Functionally, antimicrobial peptide. The sequence is that of Brevinin-2Rc from Pelophylax ridibundus (Marsh frog).